The primary structure comprises 221 residues: Thiopurine S-methyltransferase (221 aa).

Residues W12, L47, E68, and R125 each contribute to the S-adenosyl-L-methionine site.

This sequence belongs to the class I-like SAM-binding methyltransferase superfamily. TPMT family.

Its subcellular location is the cytoplasm. The enzyme catalyses S-adenosyl-L-methionine + a thiopurine = S-adenosyl-L-homocysteine + a thiopurine S-methylether.. In Legionella pneumophila (strain Paris), this protein is Thiopurine S-methyltransferase.